The primary structure comprises 348 residues: Protein RecA (348 aa).

Residue 65 to 72 coordinates ATP; the sequence is GPESSGKT.

It belongs to the RecA family.

It is found in the cytoplasm. Its function is as follows. Can catalyze the hydrolysis of ATP in the presence of single-stranded DNA, the ATP-dependent uptake of single-stranded DNA by duplex DNA, and the ATP-dependent hybridization of homologous single-stranded DNAs. It interacts with LexA causing its activation and leading to its autocatalytic cleavage. The polypeptide is Protein RecA (Enterococcus faecalis (strain ATCC 700802 / V583)).